Consider the following 180-residue polypeptide: NAD(P)H-quinone oxidoreductase subunit I, chloroplastic (180 aa).

2 consecutive 4Fe-4S ferredoxin-type domains span residues 55-84 (GRIH…VDWR) and 95-124 (LNYS…MTEE). Cys64, Cys67, Cys70, Cys74, Cys104, Cys107, Cys110, and Cys114 together coordinate [4Fe-4S] cluster.

The protein belongs to the complex I 23 kDa subunit family. As to quaternary structure, NDH is composed of at least 16 different subunits, 5 of which are encoded in the nucleus. The cofactor is [4Fe-4S] cluster.

It localises to the plastid. The protein localises to the chloroplast thylakoid membrane. The catalysed reaction is a plastoquinone + NADH + (n+1) H(+)(in) = a plastoquinol + NAD(+) + n H(+)(out). The enzyme catalyses a plastoquinone + NADPH + (n+1) H(+)(in) = a plastoquinol + NADP(+) + n H(+)(out). Functionally, NDH shuttles electrons from NAD(P)H:plastoquinone, via FMN and iron-sulfur (Fe-S) centers, to quinones in the photosynthetic chain and possibly in a chloroplast respiratory chain. The immediate electron acceptor for the enzyme in this species is believed to be plastoquinone. Couples the redox reaction to proton translocation, and thus conserves the redox energy in a proton gradient. This is NAD(P)H-quinone oxidoreductase subunit I, chloroplastic from Dioscorea elephantipes (Elephant's foot yam).